Reading from the N-terminus, the 228-residue chain is Tungstate uptake system permease protein TupB (228 aa).

Helical transmembrane passes span 25–45, 65–85, 102–122, 144–164, and 203–223; these read IIFLSVFVSSTATAIAAAVSI, VLYSLMSVPSVIVGLVVAIGL, AMIIAQALLVFPLCLGLTYSL, VIILIIRELKAELFINVVTTF, and MAIALGLVLLMISFAINAVIY. Positions 26-222 constitute an ABC transmembrane type-1 domain; that stretch reads IFLSVFVSST…MISFAINAVI (197 aa).

This sequence belongs to the binding-protein-dependent transport system permease family. In terms of assembly, the complex is composed of two ATP-binding proteins (TupC), two transmembrane proteins (TupB) and a solute-binding protein (TupA).

The protein resides in the cell membrane. In terms of biological role, part of an ABC transporter complex involved in tungstate uptake. Probably responsible for the translocation of the substrate across the membrane. The chain is Tungstate uptake system permease protein TupB from Peptoclostridium acidaminophilum (Eubacterium acidaminophilum).